The following is a 507-amino-acid chain: Inactive alanine aminotransferase (507 aa).

Residues alanine 173, serine 174, tyrosine 199, asparagine 255, and serine 324 each coordinate pyridoxal 5'-phosphate. Position 327 is an N6-(pyridoxal phosphate)lysine (lysine 327). Arginine 336 contributes to the pyridoxal 5'-phosphate binding site.

The protein belongs to the class-I pyridoxal-phosphate-dependent aminotransferase family. Alanine aminotransferase subfamily. In terms of assembly, homodimer. Pyridoxal 5'-phosphate is required as a cofactor.

It localises to the cytoplasm. The protein resides in the nucleus. In terms of biological role, inactive alanine aminotransferase. Forms a catalytically active Schiff base with PLP, but lacks alanine transaminase activity, probably due to an altered structural conformation of the dimeric enzyme. This suggests this protein may have a yet undiscovered physiological function. In Saccharomyces cerevisiae (strain ATCC 204508 / S288c) (Baker's yeast), this protein is Inactive alanine aminotransferase (ALT2).